The sequence spans 289 residues: L-alanyl-D-glutamate peptidase (289 aa).

This sequence belongs to the peptidase M15C family.

It localises to the secreted. In terms of biological role, cell wall lytic enzyme. Hydrolyzes the link between L-alanine and D-glutamate residues in certain bacterial cell-wall glycopeptides. In Listeria monocytogenes (Bacteriophage A500), this protein is L-alanyl-D-glutamate peptidase (ply).